The chain runs to 482 residues: High affinity 3',5'-cyclic-AMP phosphodiesterase 7A (482 aa).

The residue at position 84 (S84) is a Phosphoserine. One can recognise a PDEase domain in the interval 136-458 (LDDDYNGQAK…ASWKGLQREQ (323 aa)). Catalysis depends on H212, which acts as the Proton donor. The a divalent metal cation site is built by H216, H252, D253, and D362.

Belongs to the cyclic nucleotide phosphodiesterase family. PDE7 subfamily. In terms of assembly, interacts with CBFA2T3. A divalent metal cation is required as a cofactor. As to expression, found at high levels in skeletal muscle and at low levels in a variety of tissues including brain and heart. It is expressed as well in two T-cell lines. In terms of tissue distribution, found abundantly in skeletal muscle and at low levels in heart.

Its subcellular location is the cytoplasm. The protein localises to the cytosol. The enzyme catalyses 3',5'-cyclic AMP + H2O = AMP + H(+). It functions in the pathway purine metabolism; 3',5'-cyclic AMP degradation; AMP from 3',5'-cyclic AMP: step 1/1. Insensitive to all selective PDE inhibitors. Functionally, hydrolyzes the second messenger cAMP, which is a key regulator of many important physiological processes. May have a role in muscle signal transduction. The chain is High affinity 3',5'-cyclic-AMP phosphodiesterase 7A from Homo sapiens (Human).